The following is a 342-amino-acid chain: MLKFIQNNREITALLAVVLLFVLPGFLDRQYLSVQTLTMVYSSAQILILLAMGATLVMLTRNIDVSVGSITGMCAVLLGMLLNAGYSLPVACVATLLLGLLAGFFNGALVAWLKIPAIVATLGTLGLYRGIMLLWTGGKWIEGLPAELKQLSAPLLLGISAIGWLTIILVAFMAWLLAKTAFGRSFYATGDNLQGARQLGVRTEAIRIVAFSLNGCMAALAGIVFASQIGFILNQTGTGLEMKAIAACVLGGISLLGGSGAIIGAVLGAWFLTQIDSVLVLLRIPAWWNDFIAGLVLLAVLVFDGRLRCALERNLRRQKYARFMTPPPSVKPASSGKKREAA.

At 1-13 (MLKFIQNNREITA) the chain is on the periplasmic side. The chain crosses the membrane as a helical span at residues 14-34 (LLAVVLLFVLPGFLDRQYLSV). The Cytoplasmic segment spans residues 35–38 (QTLT). The helical transmembrane segment at 39-59 (MVYSSAQILILLAMGATLVML) threads the bilayer. Over 60 to 69 (TRNIDVSVGS) the chain is Periplasmic. The helical transmembrane segment at 70-90 (ITGMCAVLLGMLLNAGYSLPV) threads the bilayer. Over 91 to 92 (AC) the chain is Cytoplasmic. A helical transmembrane segment spans residues 93–113 (VATLLLGLLAGFFNGALVAWL). Lysine 114 is a topological domain (periplasmic). A helical membrane pass occupies residues 115-135 (IPAIVATLGTLGLYRGIMLLW). The Cytoplasmic portion of the chain corresponds to 136–154 (TGGKWIEGLPAELKQLSAP). A helical transmembrane segment spans residues 155–175 (LLLGISAIGWLTIILVAFMAW). Residues 176–212 (LLAKTAFGRSFYATGDNLQGARQLGVRTEAIRIVAFS) lie on the Periplasmic side of the membrane. A helical transmembrane segment spans residues 213 to 233 (LNGCMAALAGIVFASQIGFIL). The Cytoplasmic segment spans residues 234 to 251 (NQTGTGLEMKAIAACVLG). The chain crosses the membrane as a helical span at residues 252–272 (GISLLGGSGAIIGAVLGAWFL). At 273 to 283 (TQIDSVLVLLR) the chain is on the periplasmic side. A helical membrane pass occupies residues 284–304 (IPAWWNDFIAGLVLLAVLVFD). Over 305–342 (GRLRCALERNLRRQKYARFMTPPPSVKPASSGKKREAA) the chain is Cytoplasmic.

It belongs to the binding-protein-dependent transport system permease family. AraH/RbsC subfamily. In terms of assembly, the complex is composed of two ATP-binding proteins (LsrA), two transmembrane proteins (LsrC and LsrD) and a solute-binding protein (LsrB).

The protein localises to the cell inner membrane. Functionally, part of the ABC transporter complex LsrABCD involved in autoinducer 2 (AI-2) import. Probably responsible for the translocation of the substrate across the membrane. The chain is Autoinducer 2 import system permease protein LsrC (lsrC) from Shigella flexneri.